We begin with the raw amino-acid sequence, 251 residues long: Hydroxyacylglutathione hydrolase (251 aa).

Positions 53, 55, 57, 58, 109, 126, and 164 each coordinate Zn(2+).

Belongs to the metallo-beta-lactamase superfamily. Glyoxalase II family. As to quaternary structure, monomer. Zn(2+) serves as cofactor.

The enzyme catalyses an S-(2-hydroxyacyl)glutathione + H2O = a 2-hydroxy carboxylate + glutathione + H(+). The protein operates within secondary metabolite metabolism; methylglyoxal degradation; (R)-lactate from methylglyoxal: step 2/2. In terms of biological role, thiolesterase that catalyzes the hydrolysis of S-D-lactoyl-glutathione to form glutathione and D-lactic acid. This Wigglesworthia glossinidia brevipalpis protein is Hydroxyacylglutathione hydrolase.